We begin with the raw amino-acid sequence, 456 residues long: uncharacterized protein (456 aa).

In terms of domain architecture, YrdC-like spans 277–440 (IKNTKTIKQL…TKQLVRTTAK (164 aa)).

This is an uncharacterized protein from Mycoplasma genitalium (strain ATCC 33530 / DSM 19775 / NCTC 10195 / G37) (Mycoplasmoides genitalium).